Here is a 368-residue protein sequence, read N- to C-terminus: tRNA-specific 2-thiouridylase MnmA (368 aa).

Residues 12–19 (GMSGGVDS) and methionine 38 each bind ATP. Residues 98–100 (NPD) are interaction with target base in tRNA. Cysteine 103 functions as the Nucleophile in the catalytic mechanism. Cysteines 103 and 200 form a disulfide. Residue glycine 128 participates in ATP binding. Residues 150–152 (KDQ) form an interaction with tRNA region. The active-site Cysteine persulfide intermediate is cysteine 200. An interaction with tRNA region spans residues 313 to 314 (RY).

It belongs to the MnmA/TRMU family. Interacts with TusE.

It is found in the cytoplasm. It carries out the reaction S-sulfanyl-L-cysteinyl-[protein] + uridine(34) in tRNA + AH2 + ATP = 2-thiouridine(34) in tRNA + L-cysteinyl-[protein] + A + AMP + diphosphate + H(+). Its function is as follows. Catalyzes the 2-thiolation of uridine at the wobble position (U34) of tRNA(Lys), tRNA(Glu) and tRNA(Gln), leading to the formation of s(2)U34, the first step of tRNA-mnm(5)s(2)U34 synthesis. Sulfur is provided by IscS, via a sulfur-relay system. Binds ATP and its substrate tRNAs. The protein is tRNA-specific 2-thiouridylase MnmA of Pectobacterium atrosepticum (strain SCRI 1043 / ATCC BAA-672) (Erwinia carotovora subsp. atroseptica).